We begin with the raw amino-acid sequence, 315 residues long: Probable serine acetyltransferase 4 (315 aa).

The interval 287–315 is disordered; it reads AKPIIGKKAAPQRRPEELPGVTMEQRWSD.

The protein belongs to the transferase hexapeptide repeat family. As to quaternary structure, homomultimer.

It carries out the reaction L-serine + acetyl-CoA = O-acetyl-L-serine + CoA. It functions in the pathway amino-acid biosynthesis; L-cysteine biosynthesis; L-cysteine from L-serine: step 1/2. This chain is Probable serine acetyltransferase 4 (SAT4), found in Oryza sativa subsp. japonica (Rice).